A 324-amino-acid polypeptide reads, in one-letter code: CYFIP-related Rac1 interactor B (324 aa).

Glycine 2 is lipidated: N-myristoyl glycine. Lysine 74 is covalently cross-linked (Glycyl lysine isopeptide (Lys-Gly) (interchain with G-Cter in ubiquitin)).

This sequence belongs to the CYRI family. As to quaternary structure, interacts with RAC1 (GTP-bound form preferentially). In terms of processing, ubiquitinated at Lys-74 upon Salmonella bacterial infection.

The protein localises to the membrane. Its subcellular location is the mitochondrion. Functionally, negatively regulates RAC1 signaling and RAC1-driven cytoskeletal remodeling. Regulates chemotaxis, cell migration and epithelial polarization by controlling the polarity, plasticity, duration and extent of protrusions. Limits Rac1 mediated activation of the Scar/WAVE complex, focuses protrusion signals and regulates pseudopod complexity by inhibiting Scar/WAVE-induced actin polymerization. Protects against Salmonella bacterial infection. Attenuates processes such as macropinocytosis, phagocytosis and cell migration and restrict sopE-mediated bacterial entry. Also restricts infection mediated by Mycobacterium tuberculosis and Listeria monocytogenes. Involved in the regulation of mitochondrial dynamics and oxidative stress. The sequence is that of CYFIP-related Rac1 interactor B from Homo sapiens (Human).